A 33-amino-acid polypeptide reads, in one-letter code: Photosystem II reaction center protein Psb30 (33 aa).

A helical transmembrane segment spans residues 5–25; sequence LIGQLVTVALVVGAGPIIIGA.

It belongs to the Psb30/Ycf12 family. As to quaternary structure, PSII is composed of 1 copy each of membrane proteins PsbA, PsbB, PsbC, PsbD, PsbE, PsbF, PsbH, PsbI, PsbJ, PsbK, PsbL, PsbM, PsbT, PsbX, PsbY, PsbZ, Psb30/Ycf12, peripheral proteins of the oxygen-evolving complex and a large number of cofactors. It forms dimeric complexes.

The protein localises to the plastid. The protein resides in the chloroplast thylakoid membrane. Its function is as follows. A core subunit of photosystem II (PSII), probably helps stabilize the reaction center. This Ostreococcus tauri protein is Photosystem II reaction center protein Psb30.